Reading from the N-terminus, the 362-residue chain is Mannose-1-phosphate guanyltransferase (362 aa).

It belongs to the transferase hexapeptide repeat family.

It is found in the cytoplasm. It carries out the reaction alpha-D-mannose 1-phosphate + GTP + H(+) = GDP-alpha-D-mannose + diphosphate. The protein operates within nucleotide-sugar biosynthesis; GDP-alpha-D-mannose biosynthesis; GDP-alpha-D-mannose from alpha-D-mannose 1-phosphate (GTP route): step 1/1. Functionally, involved in cell wall synthesis where it is required for glycosylation. Involved in cell cycle progression through cell-size checkpoint. The polypeptide is Mannose-1-phosphate guanyltransferase (MPG1) (Debaryomyces hansenii (strain ATCC 36239 / CBS 767 / BCRC 21394 / JCM 1990 / NBRC 0083 / IGC 2968) (Yeast)).